We begin with the raw amino-acid sequence, 303 residues long: MISIFSKLKQSLSKTSNKISKGIDKIFYKKKLDTETLEELEELLIASDMSVSVVTNIIEEFKKVKFDKEIDSDTVKEALAELIEQQLSKSEIPFTLNENKLNVILVCGVNGAGKTTTIGKLAAMYGMQGKKVAVAACDTFRAAAVNQLSTWVDRANALLITGEESADPASVAYRAMEESIKQNIDILFIDTAGRLHNKKNLMDELSKIVKVIKKLDENAPTHSVLVIDAITGQNTYNQVEHFNDATNLTGLIVTKLDGSAKAGVLVGVVQKFNLPVYFIGIGEKIEDLKIFNRHDFAKSLVGL.

Residues 108–115 (GVNGAGKT), 190–194 (DTAGR), and 254–257 (TKLD) each bind GTP.

Belongs to the GTP-binding SRP family. FtsY subfamily. In terms of assembly, part of the signal recognition particle protein translocation system, which is composed of SRP and FtsY. SRP is a ribonucleoprotein composed of Ffh and a 4.5S RNA molecule.

The protein localises to the cell inner membrane. The protein resides in the cytoplasm. The enzyme catalyses GTP + H2O = GDP + phosphate + H(+). Functionally, involved in targeting and insertion of nascent membrane proteins into the cytoplasmic membrane. Acts as a receptor for the complex formed by the signal recognition particle (SRP) and the ribosome-nascent chain (RNC). Interaction with SRP-RNC leads to the transfer of the RNC complex to the Sec translocase for insertion into the membrane, the hydrolysis of GTP by both Ffh and FtsY, and the dissociation of the SRP-FtsY complex into the individual components. The sequence is that of Signal recognition particle receptor FtsY from Rickettsia felis (strain ATCC VR-1525 / URRWXCal2) (Rickettsia azadi).